The following is a 162-amino-acid chain: Lipoprotein signal peptidase (162 aa).

The next 3 membrane-spanning stretches (helical) occupy residues 12 to 32 (WLWL…LILQ), 70 to 90 (WFFA…MYRS), and 102 to 122 (ALII…GFVV). Catalysis depends on residues Asp123 and Asp141. The helical transmembrane segment at 137–157 (FNLADSAICIGAALIVLEGFL) threads the bilayer.

This sequence belongs to the peptidase A8 family.

It localises to the cell inner membrane. The enzyme catalyses Release of signal peptides from bacterial membrane prolipoproteins. Hydrolyzes -Xaa-Yaa-Zaa-|-(S,diacylglyceryl)Cys-, in which Xaa is hydrophobic (preferably Leu), and Yaa (Ala or Ser) and Zaa (Gly or Ala) have small, neutral side chains.. It functions in the pathway protein modification; lipoprotein biosynthesis (signal peptide cleavage). Its function is as follows. This protein specifically catalyzes the removal of signal peptides from prolipoproteins. This Citrobacter koseri (strain ATCC BAA-895 / CDC 4225-83 / SGSC4696) protein is Lipoprotein signal peptidase.